A 547-amino-acid polypeptide reads, in one-letter code: Chaperonin GroEL (547 aa).

ATP is bound by residues 30 to 33, lysine 51, 87 to 91, glycine 415, and aspartate 495; these read TLGP and DGTTT.

It belongs to the chaperonin (HSP60) family. Forms a cylinder of 14 subunits composed of two heptameric rings stacked back-to-back. Interacts with the co-chaperonin GroES.

Its subcellular location is the cytoplasm. It catalyses the reaction ATP + H2O + a folded polypeptide = ADP + phosphate + an unfolded polypeptide.. Functionally, together with its co-chaperonin GroES, plays an essential role in assisting protein folding. The GroEL-GroES system forms a nano-cage that allows encapsulation of the non-native substrate proteins and provides a physical environment optimized to promote and accelerate protein folding. In Rhizobium leguminosarum bv. trifolii (strain WSM2304), this protein is Chaperonin GroEL.